A 1464-amino-acid polypeptide reads, in one-letter code: DNA polymerase III PolC-type (1464 aa).

Positions 426 to 582 (YVVFDVETTG…YDAEATGRLL (157 aa)) constitute an Exonuclease domain.

This sequence belongs to the DNA polymerase type-C family. PolC subfamily.

The protein localises to the cytoplasm. The enzyme catalyses DNA(n) + a 2'-deoxyribonucleoside 5'-triphosphate = DNA(n+1) + diphosphate. Its function is as follows. Required for replicative DNA synthesis. This DNA polymerase also exhibits 3' to 5' exonuclease activity. The polypeptide is DNA polymerase III PolC-type (Streptococcus thermophilus (strain CNRZ 1066)).